The chain runs to 187 residues: MSITEYATELKGALRQYPNFPQEGILFEDFLPIFRDPQLFKKLIESFKLHLQEKFTGKKIDYVIGLEARGFLFGPALALALDAGFVPVRKQGKLAGEVVHAVYAKEYGEDVFEIQADSIPEHSNVVIVDDIIATGGSAKAAGDLALQLNANILEFCFVMELDFLKGTQKLQAPSFTLLSGQEEALSK.

133 to 137 (ATGGS) is an AMP binding site.

This sequence belongs to the purine/pyrimidine phosphoribosyltransferase family. Homodimer. The cofactor is Mg(2+).

The protein localises to the cytoplasm. Its subcellular location is the nucleus. The enzyme catalyses AMP + diphosphate = 5-phospho-alpha-D-ribose 1-diphosphate + adenine. It participates in purine metabolism; AMP biosynthesis via salvage pathway; AMP from adenine: step 1/1. Catalyzes a salvage reaction resulting in the formation of AMP, that is energically less costly than de novo synthesis. The chain is Adenine phosphoribosyltransferase (APT1) from Kluyveromyces lactis (strain ATCC 8585 / CBS 2359 / DSM 70799 / NBRC 1267 / NRRL Y-1140 / WM37) (Yeast).